The sequence spans 497 residues: Pseudooxynicotine dehydrogenase (497 aa).

Positions 1 to 43 (MANDKGDISKDGVSRRKFLGGAVIGAAAAAGVGSQILSLSATA) form a signal peptide, tat-type signal. Residues alanine 70, glutamate 89, arginine 97, tryptophan 114, valine 286, serine 462, and isoleucine 472 each contribute to the FAD site.

The protein belongs to the flavin monoamine oxidase family. As to quaternary structure, homodimer. FAD serves as cofactor. Predicted to be exported by the Tat system. The position of the signal peptide cleavage has not been experimentally proven.

It is found in the periplasm. The catalysed reaction is pseudooxynicotine + 2 Fe(III)-[cytochrome c] + H2O = 4-oxo-4-(pyridin-3-yl)butanal + methylamine + 2 Fe(II)-[cytochrome c] + 2 H(+). It functions in the pathway alkaloid degradation; nicotine degradation. With respect to regulation, strongly inhibited by Ag(+), Co(2+), Cu(2+) and Hg(2+). Involved in nicotine degradation. Catalyzes the deamination of pseudooxynicotine to 3-succinoylsemialdehyde-pyridine. The polypeptide is Pseudooxynicotine dehydrogenase (Pseudomonas sp).